The following is a 307-amino-acid chain: Protease HtpX homolog 1 (307 aa).

The next 2 helical transmembrane spans lie at 7–27 and 38–60; these read LKTLMFLSGTLTIIAEGIITY and IFTAIFLVILWLIQWLIAPYLVG. His-133 contributes to the Zn(2+) binding site. Residue Glu-134 is part of the active site. His-137 provides a ligand contact to Zn(2+). A run of 2 helical transmembrane segments spans residues 145 to 165 and 180 to 200; these read IGMALGLIPTIIGYVGNFLLF and LILGLAMLAIGGVLFVLTFLL. Residue Glu-212 participates in Zn(2+) binding.

This sequence belongs to the peptidase M48B family. Zn(2+) serves as cofactor.

It localises to the cell membrane. This Sulfolobus acidocaldarius (strain ATCC 33909 / DSM 639 / JCM 8929 / NBRC 15157 / NCIMB 11770) protein is Protease HtpX homolog 1.